A 384-amino-acid polypeptide reads, in one-letter code: Succinyl-diaminopimelate desuccinylase (384 aa).

Residue H71 coordinates Zn(2+). The active site involves D73. D104 lines the Zn(2+) pocket. Residue E139 is the Proton acceptor of the active site. Zn(2+) is bound by residues E140, E168, and H357.

The protein belongs to the peptidase M20A family. DapE subfamily. As to quaternary structure, homodimer. Zn(2+) is required as a cofactor. Requires Co(2+) as cofactor.

It catalyses the reaction N-succinyl-(2S,6S)-2,6-diaminopimelate + H2O = (2S,6S)-2,6-diaminopimelate + succinate. It participates in amino-acid biosynthesis; L-lysine biosynthesis via DAP pathway; LL-2,6-diaminopimelate from (S)-tetrahydrodipicolinate (succinylase route): step 3/3. Functionally, catalyzes the hydrolysis of N-succinyl-L,L-diaminopimelic acid (SDAP), forming succinate and LL-2,6-diaminopimelate (DAP), an intermediate involved in the bacterial biosynthesis of lysine and meso-diaminopimelic acid, an essential component of bacterial cell walls. The protein is Succinyl-diaminopimelate desuccinylase of Bradyrhizobium sp. (strain BTAi1 / ATCC BAA-1182).